Reading from the N-terminus, the 464-residue chain is ATP synthase subunit beta (464 aa).

153–160 (GGAGVGKT) contacts ATP.

It belongs to the ATPase alpha/beta chains family. As to quaternary structure, F-type ATPases have 2 components, CF(1) - the catalytic core - and CF(0) - the membrane proton channel. CF(1) has five subunits: alpha(3), beta(3), gamma(1), delta(1), epsilon(1). CF(0) has three main subunits: a(1), b(2) and c(9-12). The alpha and beta chains form an alternating ring which encloses part of the gamma chain. CF(1) is attached to CF(0) by a central stalk formed by the gamma and epsilon chains, while a peripheral stalk is formed by the delta and b chains.

The protein resides in the cell membrane. The catalysed reaction is ATP + H2O + 4 H(+)(in) = ADP + phosphate + 5 H(+)(out). Produces ATP from ADP in the presence of a proton gradient across the membrane. The catalytic sites are hosted primarily by the beta subunits. This chain is ATP synthase subunit beta, found in Clostridium novyi (strain NT).